The chain runs to 155 residues: Deoxyuridine 5'-triphosphate nucleotidohydrolase (155 aa).

Substrate is bound by residues R74–G76, N87, and T91–D93.

Belongs to the dUTPase family. Mg(2+) is required as a cofactor.

It catalyses the reaction dUTP + H2O = dUMP + diphosphate + H(+). Its pathway is pyrimidine metabolism; dUMP biosynthesis; dUMP from dCTP (dUTP route): step 2/2. In terms of biological role, this enzyme is involved in nucleotide metabolism: it produces dUMP, the immediate precursor of thymidine nucleotides and it decreases the intracellular concentration of dUTP so that uracil cannot be incorporated into DNA. The polypeptide is Deoxyuridine 5'-triphosphate nucleotidohydrolase (Cereibacter sphaeroides (strain KD131 / KCTC 12085) (Rhodobacter sphaeroides)).